The sequence spans 230 residues: ATP synthase subunit a (230 aa).

Helical transmembrane passes span 17–37 (LPITQSVLTTWFIMISLFIMA), 78–98 (IFPFVATLWIFILVSNLIGVI), 107–127 (DLSVTASLAIMTFLSVHWFGI), 165–187 (LFGNIMSLQLTALIVLMIAGFLV), and 198–218 (EAIIQAYIFGMLALIYIAGGI).

It belongs to the ATPase A chain family. In terms of assembly, F-type ATPases have 2 components, CF(1) - the catalytic core - and CF(0) - the membrane proton channel. CF(1) has five subunits: alpha(3), beta(3), gamma(1), delta(1), epsilon(1). CF(0) has three main subunits: a(1), b(2) and c(9-12). The alpha and beta chains form an alternating ring which encloses part of the gamma chain. CF(1) is attached to CF(0) by a central stalk formed by the gamma and epsilon chains, while a peripheral stalk is formed by the delta and b chains.

It is found in the cell inner membrane. Its function is as follows. Key component of the proton channel; it plays a direct role in the translocation of protons across the membrane. This Legionella pneumophila subsp. pneumophila (strain Philadelphia 1 / ATCC 33152 / DSM 7513) protein is ATP synthase subunit a.